Consider the following 256-residue polypeptide: Small ribosomal subunit protein eS1A (256 aa).

Residue Ala2 is modified to N-acetylalanine; partial.

It belongs to the eukaryotic ribosomal protein eS1 family. In terms of assembly, component of the small ribosomal subunit. Mature ribosomes consist of a small (40S) and a large (60S) subunit. The 40S subunit contains about 33 different proteins and 1 molecule of RNA (18S). The 60S subunit contains about 49 different proteins and 3 molecules of RNA (25S, 5.8S and 5S).

The protein localises to the cytoplasm. The polypeptide is Small ribosomal subunit protein eS1A (Debaryomyces hansenii (strain ATCC 36239 / CBS 767 / BCRC 21394 / JCM 1990 / NBRC 0083 / IGC 2968) (Yeast)).